Consider the following 298-residue polypeptide: Arginase (298 aa).

Mn(2+) contacts are provided by His98, Asp121, His123, and Asp125. Substrate is bound by residues His123–Asn127, Ser134–Asn136, and Asp177. Mn(2+) contacts are provided by Asp225 and Asp227. Residues Thr239 and Glu270 each coordinate substrate.

Belongs to the arginase family. Mn(2+) serves as cofactor.

The enzyme catalyses L-arginine + H2O = urea + L-ornithine. Its pathway is nitrogen metabolism; urea cycle; L-ornithine and urea from L-arginine: step 1/1. The sequence is that of Arginase (rocF) from Brevibacillus brevis (Bacillus brevis).